The following is a 1044-amino-acid chain: Pre-mRNA-splicing factor ATP-dependent RNA helicase DHX16 (1044 aa).

2 disordered regions span residues 101 to 210 (EDSE…AYEE) and 374 to 394 (LQGNEEPSAPPTSTQAQQKES). Phosphoserine occurs at positions 103, 106, and 107. A compositionally biased stretch (basic residues) spans 119-130 (QKKRKKRKHLRK). Positions 134 to 143 (EEEEEEEEEA) are enriched in acidic residues. At Ser-163 the chain carries Phosphoserine. Residues 169 to 210 (RTERERLQDLEERDAFAERVRQRDKDRTRNVLERSDKKAYEE) are compositionally biased toward basic and acidic residues. The Helicase ATP-binding domain maps to 412 to 576 (LAAIANHQVL…FDDAPVFRIP (165 aa)). Residue 425–432 (GETGSGKT) participates in ATP binding. The DEAH box signature appears at 523–526 (DEAH). Positions 601 to 774 (SVLQIHVTQP…NVVLLLKSLG (174 aa)) constitute a Helicase C-terminal domain. Thr-715 carries the phosphothreonine modification.

This sequence belongs to the DEAD box helicase family. DEAH subfamily. DDX16/PRP8 sub-subfamily. As to quaternary structure, component of pre-catalytic spliceosome complexes. Component of the minor spliceosome, which splices U12-type introns. Interacts with GPKOW. Interacts with TRIM6. Interacts with RIGI.

It localises to the nucleus. The protein resides in the nucleoplasm. Its subcellular location is the cytoplasm. The catalysed reaction is ATP + H2O = ADP + phosphate + H(+). Its function is as follows. Required for pre-mRNA splicing as a component of the spliceosome. Contributes to pre-mRNA splicing after spliceosome formation and prior to the first transesterification reaction. As a component of the minor spliceosome, involved in the splicing of U12-type introns in pre-mRNAs. Also plays a role in innate antiviral response by acting as a pattern recognition receptor sensing splicing signals in viral RNA. Mechanistically, TRIM6 promotes the interaction between unanchored 'Lys-48'-polyubiquitin chains and DHX16, leading to DHX16 interaction with RIGI and ssRNA to amplify RIGI-dependent innate antiviral immune responses. The chain is Pre-mRNA-splicing factor ATP-dependent RNA helicase DHX16 (DHX16) from Pan troglodytes (Chimpanzee).